The chain runs to 147 residues: Hemoglobin subunit delta (147 aa).

Positions 3–147 (HLTADETALV…VANALAHKYH (145 aa)) constitute a Globin domain. Residue Ser51 is modified to Phosphoserine. The heme b site is built by His64 and His93.

It belongs to the globin family. As to quaternary structure, heterotetramer of two delta chains and two alpha chains. In terms of tissue distribution, red blood cells.

The protein is Hemoglobin subunit delta (HBD) of Dugong dugon (Dugong).